The primary structure comprises 219 residues: Cytidylate kinase (219 aa).

21 to 29 (GPAASGKGT) serves as a coordination point for ATP.

This sequence belongs to the cytidylate kinase family. Type 1 subfamily.

The protein localises to the cytoplasm. The catalysed reaction is CMP + ATP = CDP + ADP. It catalyses the reaction dCMP + ATP = dCDP + ADP. The sequence is that of Cytidylate kinase from Rickettsia akari (strain Hartford).